The chain runs to 336 residues: Holliday junction branch migration complex subunit RuvB (336 aa).

The segment at 4–184 is large ATPase domain (RuvB-L); sequence ADRLVSADSS…FGIVQRLEFY (181 aa). ATP-binding positions include I23, R24, G65, K68, T69, T70, 131–133, R174, Y184, and R221; that span reads EDY. A Mg(2+)-binding site is contributed by T69. The segment at 185–255 is small ATPAse domain (RuvB-S); sequence QIPDLQHIVS…IAAQALDMLN (71 aa). A head domain (RuvB-H) region spans residues 258 to 336; it reads AEGFDYMDRK…HFGITPPEMP (79 aa). The DNA site is built by R294, R313, and R318.

The protein belongs to the RuvB family. As to quaternary structure, homohexamer. Forms an RuvA(8)-RuvB(12)-Holliday junction (HJ) complex. HJ DNA is sandwiched between 2 RuvA tetramers; dsDNA enters through RuvA and exits via RuvB. An RuvB hexamer assembles on each DNA strand where it exits the tetramer. Each RuvB hexamer is contacted by two RuvA subunits (via domain III) on 2 adjacent RuvB subunits; this complex drives branch migration. In the full resolvosome a probable DNA-RuvA(4)-RuvB(12)-RuvC(2) complex forms which resolves the HJ.

It is found in the cytoplasm. The catalysed reaction is ATP + H2O = ADP + phosphate + H(+). Its function is as follows. The RuvA-RuvB-RuvC complex processes Holliday junction (HJ) DNA during genetic recombination and DNA repair, while the RuvA-RuvB complex plays an important role in the rescue of blocked DNA replication forks via replication fork reversal (RFR). RuvA specifically binds to HJ cruciform DNA, conferring on it an open structure. The RuvB hexamer acts as an ATP-dependent pump, pulling dsDNA into and through the RuvAB complex. RuvB forms 2 homohexamers on either side of HJ DNA bound by 1 or 2 RuvA tetramers; 4 subunits per hexamer contact DNA at a time. Coordinated motions by a converter formed by DNA-disengaged RuvB subunits stimulates ATP hydrolysis and nucleotide exchange. Immobilization of the converter enables RuvB to convert the ATP-contained energy into a lever motion, pulling 2 nucleotides of DNA out of the RuvA tetramer per ATP hydrolyzed, thus driving DNA branch migration. The RuvB motors rotate together with the DNA substrate, which together with the progressing nucleotide cycle form the mechanistic basis for DNA recombination by continuous HJ branch migration. Branch migration allows RuvC to scan DNA until it finds its consensus sequence, where it cleaves and resolves cruciform DNA. This chain is Holliday junction branch migration complex subunit RuvB, found in Klebsiella pneumoniae (strain 342).